The primary structure comprises 225 residues: Peptidyl-tRNA hydrolase (225 aa).

Tyr-27 contacts tRNA. The Proton acceptor role is filled by His-32. Residues Tyr-78, Asn-80, and Asn-126 each contribute to the tRNA site. The interval 198–225 is disordered; that stretch reads FNPLDFSGPDRQDQPAPLNPAKTAPGES.

The protein belongs to the PTH family. Monomer.

Its subcellular location is the cytoplasm. It catalyses the reaction an N-acyl-L-alpha-aminoacyl-tRNA + H2O = an N-acyl-L-amino acid + a tRNA + H(+). Hydrolyzes ribosome-free peptidyl-tRNAs (with 1 or more amino acids incorporated), which drop off the ribosome during protein synthesis, or as a result of ribosome stalling. In terms of biological role, catalyzes the release of premature peptidyl moieties from peptidyl-tRNA molecules trapped in stalled 50S ribosomal subunits, and thus maintains levels of free tRNAs and 50S ribosomes. This chain is Peptidyl-tRNA hydrolase, found in Synechococcus sp. (strain JA-3-3Ab) (Cyanobacteria bacterium Yellowstone A-Prime).